A 534-amino-acid chain; its full sequence is Probable alanine aminotransferase, mitochondrial (534 aa).

Residues 1–18 constitute a mitochondrion transit peptide; that stretch reads MFKRSLKVLLSNPPINRV. N6-(pyridoxal phosphate)lysine is present on K352.

It belongs to the class-I pyridoxal-phosphate-dependent aminotransferase family. Alanine aminotransferase subfamily. Homodimer. It depends on pyridoxal 5'-phosphate as a cofactor.

Its subcellular location is the mitochondrion matrix. The catalysed reaction is L-alanine + 2-oxoglutarate = pyruvate + L-glutamate. It functions in the pathway amino-acid degradation; L-alanine degradation via transaminase pathway; pyruvate from L-alanine: step 1/1. The polypeptide is Probable alanine aminotransferase, mitochondrial (gpt) (Dictyostelium discoideum (Social amoeba)).